Consider the following 895-residue polypeptide: Putative endoplasmic reticulum metallopeptidase 1-A (895 aa).

The segment at methionine 1–arginine 30 is disordered. Topologically, residues methionine 1–serine 34 are cytoplasmic. Residues glutamate 10 to arginine 30 show a composition bias toward basic and acidic residues. The helical transmembrane segment at isoleucine 35–valine 55 threads the bilayer. Topologically, residues alanine 56 to serine 383 are lumenal. Residues histidine 174 and aspartate 186 each coordinate Zn(2+). Glutamate 220 functions as the Proton acceptor in the catalytic mechanism. 3 residues coordinate Zn(2+): glutamate 221, glutamate 247, and histidine 323. Residues valine 384–leucine 404 form a helical membrane-spanning segment. Residues arginine 405–histidine 423 lie on the Cytoplasmic side of the membrane. The helical transmembrane segment at valine 424 to methionine 444 threads the bilayer. The Lumenal portion of the chain corresponds to aspartate 445–lysine 452. The chain crosses the membrane as a helical span at residues methionine 453–histidine 473. At serine 474–threonine 492 the chain is on the cytoplasmic side. Residues isoleucine 493–phenylalanine 513 form a helical membrane-spanning segment. At tyrosine 514–asparagine 517 the chain is on the lumenal side. The helical transmembrane segment at asparagine 518–isoleucine 538 threads the bilayer. The Cytoplasmic portion of the chain corresponds to arginine 539–arginine 544. The chain crosses the membrane as a helical span at residues valine 545–isoleucine 565. Over serine 566–glutamate 586 the chain is Lumenal. Residues phenylalanine 587–leucine 607 traverse the membrane as a helical segment. Topologically, residues phenylalanine 608–arginine 613 are cytoplasmic. Residues methionine 614–threonine 634 form a helical membrane-spanning segment. Residues threonine 635 to phenylalanine 895 lie on the Lumenal side of the membrane. N-linked (GlcNAc...) asparagine glycosylation is found at asparagine 659, asparagine 702, and asparagine 758.

The protein belongs to the peptidase M28 family. Zn(2+) serves as cofactor.

The protein resides in the endoplasmic reticulum membrane. This Caenorhabditis elegans protein is Putative endoplasmic reticulum metallopeptidase 1-A.